A 100-amino-acid polypeptide reads, in one-letter code: Urease subunit gamma (100 aa).

The protein belongs to the urease gamma subunit family. In terms of assembly, heterotrimer of UreA (gamma), UreB (beta) and UreC (alpha) subunits. Three heterotrimers associate to form the active enzyme.

The protein localises to the cytoplasm. It carries out the reaction urea + 2 H2O + H(+) = hydrogencarbonate + 2 NH4(+). It functions in the pathway nitrogen metabolism; urea degradation; CO(2) and NH(3) from urea (urease route): step 1/1. This Haemophilus influenzae (strain PittEE) protein is Urease subunit gamma.